Consider the following 444-residue polypeptide: Transposase for insertion sequence element IS1557 (444 aa).

Positions 273-292 (PKWGRGRPGKNAAPRPGRER) are disordered.

This sequence belongs to the transposase 12 family.

The sequence is that of Transposase for insertion sequence element IS1557 from Mycobacterium tuberculosis (strain CDC 1551 / Oshkosh).